The following is a 483-amino-acid chain: Aspartyl/glutamyl-tRNA(Asn/Gln) amidotransferase subunit B (483 aa).

Belongs to the GatB/GatE family. GatB subfamily. Heterotrimer of A, B and C subunits.

The enzyme catalyses L-glutamyl-tRNA(Gln) + L-glutamine + ATP + H2O = L-glutaminyl-tRNA(Gln) + L-glutamate + ADP + phosphate + H(+). It carries out the reaction L-aspartyl-tRNA(Asn) + L-glutamine + ATP + H2O = L-asparaginyl-tRNA(Asn) + L-glutamate + ADP + phosphate + 2 H(+). In terms of biological role, allows the formation of correctly charged Asn-tRNA(Asn) or Gln-tRNA(Gln) through the transamidation of misacylated Asp-tRNA(Asn) or Glu-tRNA(Gln) in organisms which lack either or both of asparaginyl-tRNA or glutaminyl-tRNA synthetases. The reaction takes place in the presence of glutamine and ATP through an activated phospho-Asp-tRNA(Asn) or phospho-Glu-tRNA(Gln). This Rickettsia conorii (strain ATCC VR-613 / Malish 7) protein is Aspartyl/glutamyl-tRNA(Asn/Gln) amidotransferase subunit B.